The sequence spans 349 residues: Dihydroorotase (349 aa).

Positions 17 and 19 each coordinate Zn(2+). Residues 19-21 (HLR) and Asn-45 contribute to the substrate site. Residues Lys-105, His-142, and His-180 each coordinate Zn(2+). Lys-105 is modified (N6-carboxylysine). His-142 contacts substrate. Leu-225 contributes to the substrate binding site. Residue Asp-253 participates in Zn(2+) binding. Asp-253 is an active-site residue. Residues His-257 and Ala-269 each coordinate substrate.

It belongs to the metallo-dependent hydrolases superfamily. DHOase family. Class II DHOase subfamily. Homodimer. Zn(2+) serves as cofactor.

The catalysed reaction is (S)-dihydroorotate + H2O = N-carbamoyl-L-aspartate + H(+). Its pathway is pyrimidine metabolism; UMP biosynthesis via de novo pathway; (S)-dihydroorotate from bicarbonate: step 3/3. Its function is as follows. Catalyzes the reversible cyclization of carbamoyl aspartate to dihydroorotate. This chain is Dihydroorotase, found in Nitrosomonas europaea (strain ATCC 19718 / CIP 103999 / KCTC 2705 / NBRC 14298).